We begin with the raw amino-acid sequence, 71 residues long: Small ribosomal subunit protein bS21 (71 aa).

The protein belongs to the bacterial ribosomal protein bS21 family.

The sequence is that of Small ribosomal subunit protein bS21 from Alcanivorax borkumensis (strain ATCC 700651 / DSM 11573 / NCIMB 13689 / SK2).